Consider the following 229-residue polypeptide: Protein fmp52-2, mitochondrial (229 aa).

A mitochondrion-targeting transit peptide spans 1 to 44 (MTAAAVFGCTGAVGSQILATLLASDAFSSVATVSRKLPTAESPK).

This sequence belongs to the FMP52 family.

The protein resides in the mitochondrion outer membrane. This Aspergillus terreus (strain NIH 2624 / FGSC A1156) protein is Protein fmp52-2, mitochondrial (fmp522).